A 123-amino-acid chain; its full sequence is Small ribosomal subunit protein uS12 (123 aa).

At D89 the chain carries 3-methylthioaspartic acid. The tract at residues 104–123 (TAGVKDRKQARSKYGAKRPK) is disordered. Residues 113-123 (ARSKYGAKRPK) show a composition bias toward basic residues.

It belongs to the universal ribosomal protein uS12 family. As to quaternary structure, part of the 30S ribosomal subunit. Contacts proteins S8 and S17. May interact with IF1 in the 30S initiation complex.

With S4 and S5 plays an important role in translational accuracy. In terms of biological role, interacts with and stabilizes bases of the 16S rRNA that are involved in tRNA selection in the A site and with the mRNA backbone. Located at the interface of the 30S and 50S subunits, it traverses the body of the 30S subunit contacting proteins on the other side and probably holding the rRNA structure together. The combined cluster of proteins S8, S12 and S17 appears to hold together the shoulder and platform of the 30S subunit. This chain is Small ribosomal subunit protein uS12, found in Neisseria meningitidis serogroup C (strain 053442).